A 151-amino-acid chain; its full sequence is MTTDLIDVRITRLPHSEGLPLPAYATAGAAGFDFLAAVDAPMTIAPGERVLVPTGLCIALPPAYELQVRPRSGLALKHGITLPNSPGTIDEDYRGELRIIVMNAGTEPFTVERGTRIAQGVLAPVSRLRWTEVETLDETARGEGGFGSTGH.

Residues Arg-71–Gly-73, Asn-84, and Thr-88–Asp-90 contribute to the substrate site.

Belongs to the dUTPase family. Requires Mg(2+) as cofactor.

It carries out the reaction dUTP + H2O = dUMP + diphosphate + H(+). It functions in the pathway pyrimidine metabolism; dUMP biosynthesis; dUMP from dCTP (dUTP route): step 2/2. In terms of biological role, this enzyme is involved in nucleotide metabolism: it produces dUMP, the immediate precursor of thymidine nucleotides and it decreases the intracellular concentration of dUTP so that uracil cannot be incorporated into DNA. The protein is Deoxyuridine 5'-triphosphate nucleotidohydrolase of Gluconobacter oxydans (strain 621H) (Gluconobacter suboxydans).